The primary structure comprises 312 residues: 2-dehydropantoate 2-reductase (312 aa).

NADP(+) contacts are provided by residues 7–12 (GAGAMG), N105, and A131. N105 contacts substrate. Catalysis depends on K187, which acts as the Proton donor. 3 residues coordinate substrate: N191, N195, and S260. E273 contacts NADP(+).

It belongs to the ketopantoate reductase family.

It is found in the cytoplasm. The catalysed reaction is (R)-pantoate + NADP(+) = 2-dehydropantoate + NADPH + H(+). It functions in the pathway cofactor biosynthesis; (R)-pantothenate biosynthesis; (R)-pantoate from 3-methyl-2-oxobutanoate: step 2/2. Catalyzes the NADPH-dependent reduction of ketopantoate into pantoic acid. This chain is 2-dehydropantoate 2-reductase, found in Lactococcus lactis subsp. lactis (strain IL1403) (Streptococcus lactis).